Here is an 824-residue protein sequence, read N- to C-terminus: Lon protease (824 aa).

The tract at residues 1–23 (MNEPMSLFDDLPEEHDEPQEAPE) is disordered. The span at 10–20 (DLPEEHDEPQE) shows a compositional bias: acidic residues. Positions 26–222 (LPMVVLGEMV…KVYLVLARQL (197 aa)) constitute a Lon N-terminal domain. Residue 375-382 (GPPGVGKT) participates in ATP binding. The region spanning 617–798 (QDEVGVATGV…DEVLRIALSR (182 aa)) is the Lon proteolytic domain. Residues serine 704 and lysine 747 contribute to the active site. The tract at residues 800-824 (PTPANNQNGSHTNNRGQPSPAPAGT) is disordered. Residues 802 to 816 (PANNQNGSHTNNRGQ) show a composition bias toward polar residues.

Belongs to the peptidase S16 family. As to quaternary structure, homohexamer. Organized in a ring with a central cavity.

Its subcellular location is the cytoplasm. The catalysed reaction is Hydrolysis of proteins in presence of ATP.. In terms of biological role, ATP-dependent serine protease that mediates the selective degradation of mutant and abnormal proteins as well as certain short-lived regulatory proteins. Required for cellular homeostasis and for survival from DNA damage and developmental changes induced by stress. Degrades polypeptides processively to yield small peptide fragments that are 5 to 10 amino acids long. Binds to DNA in a double-stranded, site-specific manner. This chain is Lon protease, found in Chloroflexus aggregans (strain MD-66 / DSM 9485).